The primary structure comprises 101 residues: Protein Tat (101 aa).

The tract at residues 1-24 is interaction with human CREBBP; it reads MEPVDPNREPWNHPGSQPKTACTN. Residues 1 to 48 are transactivation; that stretch reads MEPVDPNREPWNHPGSQPKTACTNCYCKKCCYHCQVCFLQKGLGISYG. Zn(2+) contacts are provided by Cys-22, Cys-25, and Cys-27. Residues 22–37 form a cysteine-rich region; it reads CTNCYCKKCCYHCQVC. N6-acetyllysine; by host PCAF is present on Lys-28. Cys-30, His-33, Cys-34, and Cys-37 together coordinate Zn(2+). The tract at residues 38-48 is core; sequence FLQKGLGISYG. Residues 48–101 are disordered; it reads GRKKRRQRRSAPPGSKTHQDLIPKQPLSQTQRKPTGPEESKKEVESKAEPDRFD. Residues 49 to 57 carry the Nuclear localization signal, RNA-binding (TAR), and protein transduction motif; the sequence is RKKRRQRRS. The interaction with the host capping enzyme RNGTT stretch occupies residues 49 to 86; the sequence is RKKRRQRRSAPPGSKTHQDLIPKQPLSQTQRKPTGPEE. An N6-acetyllysine; by host EP300 and GCN5L2 mark is found at Lys-50 and Lys-51. An asymmetric dimethylarginine; by host PRMT6 mark is found at Arg-52 and Arg-53. Lys-71 participates in a covalent cross-link: Glycyl lysine isopeptide (Lys-Gly) (interchain with G-Cter in ubiquitin). The segment covering 82–101 has biased composition (basic and acidic residues); it reads TGPEESKKEVESKAEPDRFD.

The protein belongs to the lentiviruses Tat family. In terms of assembly, interacts with host CCNT1. Associates with the P-TEFb complex composed at least of Tat, P-TEFb (CDK9 and CCNT1), TAR RNA, RNA Pol II. Recruits the HATs CREBBP, TAF1/TFIID, EP300, PCAF and GCN5L2. Interacts with host KAT5/Tip60; this interaction targets the latter to degradation. Interacts with the host deacetylase SIRT1. Interacts with host capping enzyme RNGTT; this interaction stimulates RNGTT. Binds to host KDR, and to the host integrins ITGAV/ITGB3 and ITGA5/ITGB1. Interacts with host KPNB1/importin beta-1 without previous binding to KPNA1/importin alpha-1. Interacts with EIF2AK2. Interacts with host nucleosome assembly protein NAP1L1; this interaction may be required for the transport of Tat within the nucleus, since the two proteins interact at the nuclear rim. Interacts with host C1QBP/SF2P32; this interaction involves lysine-acetylated Tat. Interacts with the host chemokine receptors CCR2, CCR3 and CXCR4. Interacts with host DPP4/CD26; this interaction may trigger an anti-proliferative effect. Interacts with host LDLR. Interacts with the host extracellular matrix metalloproteinase MMP1. Interacts with host PRMT6; this interaction mediates Tat's methylation. Interacts with, and is ubiquitinated by MDM2/Hdm2. Interacts with host PSMC3 and HTATIP2. Interacts with STAB1; this interaction may overcome SATB1-mediated repression of IL2 and IL2RA (interleukin) in T cells by binding to the same domain than HDAC1. Interacts (when acetylated) with human CDK13, thereby increasing HIV-1 mRNA splicing and promoting the production of the doubly spliced HIV-1 protein Nef. Interacts with host TBP; this interaction modulates the activity of transcriptional pre-initiation complex. Interacts with host RELA. Interacts with host PLSCR1; this interaction negatively regulates Tat transactivation activity by altering its subcellular distribution. In terms of processing, asymmetrical arginine methylation by host PRMT6 seems to diminish the transactivation capacity of Tat and affects the interaction with host CCNT1. Acetylation by EP300, CREBBP, GCN5L2/GCN5 and PCAF regulates the transactivation activity of Tat. EP300-mediated acetylation of Lys-50 promotes dissociation of Tat from the TAR RNA through the competitive binding to PCAF's bromodomain. In addition, the non-acetylated Tat's N-terminus can also interact with PCAF. PCAF-mediated acetylation of Lys-28 enhances Tat's binding to CCNT1. Lys-50 is deacetylated by SIRT1. Post-translationally, polyubiquitination by host MDM2 does not target Tat to degradation, but activates its transactivation function and fosters interaction with CCNT1 and TAR RNA. In terms of processing, phosphorylated by EIF2AK2 on serine and threonine residues adjacent to the basic region important for TAR RNA binding and function. Phosphorylation of Tat by EIF2AK2 is dependent on the prior activation of EIF2AK2 by dsRNA.

The protein localises to the host nucleus. It is found in the host nucleolus. It localises to the host cytoplasm. The protein resides in the secreted. Transcriptional activator that increases RNA Pol II processivity, thereby increasing the level of full-length viral transcripts. Recognizes a hairpin structure at the 5'-LTR of the nascent viral mRNAs referred to as the transactivation responsive RNA element (TAR) and recruits the cyclin T1-CDK9 complex (P-TEFb complex) that will in turn hyperphosphorylate the RNA polymerase II to allow efficient elongation. The CDK9 component of P-TEFb and other Tat-activated kinases hyperphosphorylate the C-terminus of RNA Pol II that becomes stabilized and much more processive. Other factors such as HTATSF1/Tat-SF1, SUPT5H/SPT5, and HTATIP2 are also important for Tat's function. Besides its effect on RNA Pol II processivity, Tat induces chromatin remodeling of proviral genes by recruiting the histone acetyltransferases (HATs) CREBBP, EP300 and PCAF to the chromatin. This also contributes to the increase in proviral transcription rate, especially when the provirus integrates in transcriptionally silent region of the host genome. To ensure maximal activation of the LTR, Tat mediates nuclear translocation of NF-kappa-B by interacting with host RELA. Through its interaction with host TBP, Tat may also modulate transcription initiation. Tat can reactivate a latently infected cell by penetrating in it and transactivating its LTR promoter. In the cytoplasm, Tat is thought to act as a translational activator of HIV-1 mRNAs. Its function is as follows. Extracellular circulating Tat can be endocytosed by surrounding uninfected cells via the binding to several surface receptors such as CD26, CXCR4, heparan sulfate proteoglycans (HSPG) or LDLR. Neurons are rarely infected, but they internalize Tat via their LDLR. Through its interaction with nuclear HATs, Tat is potentially able to control the acetylation-dependent cellular gene expression. Modulates the expression of many cellular genes involved in cell survival, proliferation or in coding for cytokines or cytokine receptors. Tat plays a role in T-cell and neurons apoptosis. Tat induced neurotoxicity and apoptosis probably contribute to neuroAIDS. Circulating Tat also acts as a chemokine-like and/or growth factor-like molecule that binds to specific receptors on the surface of the cells, affecting many cellular pathways. In the vascular system, Tat binds to ITGAV/ITGB3 and ITGA5/ITGB1 integrins dimers at the surface of endothelial cells and competes with bFGF for heparin-binding sites, leading to an excess of soluble bFGF. The chain is Protein Tat from Homo sapiens (Human).